Here is a 250-residue protein sequence, read N- to C-terminus: 4-hydroxy-tetrahydrodipicolinate reductase (250 aa).

Residues 10-15 (GVKGRI), 78-80 (GTT), and 105-108 (APNF) contribute to the NAD(+) site. The Proton donor/acceptor role is filled by His-135. (S)-2,3,4,5-tetrahydrodipicolinate is bound at residue His-136. The Proton donor role is filled by Lys-139. 145 to 146 (GT) is a binding site for (S)-2,3,4,5-tetrahydrodipicolinate.

It belongs to the DapB family.

The protein localises to the cytoplasm. The catalysed reaction is (S)-2,3,4,5-tetrahydrodipicolinate + NAD(+) + H2O = (2S,4S)-4-hydroxy-2,3,4,5-tetrahydrodipicolinate + NADH + H(+). It catalyses the reaction (S)-2,3,4,5-tetrahydrodipicolinate + NADP(+) + H2O = (2S,4S)-4-hydroxy-2,3,4,5-tetrahydrodipicolinate + NADPH + H(+). It participates in amino-acid biosynthesis; L-lysine biosynthesis via DAP pathway; (S)-tetrahydrodipicolinate from L-aspartate: step 4/4. Its function is as follows. Catalyzes the conversion of 4-hydroxy-tetrahydrodipicolinate (HTPA) to tetrahydrodipicolinate. The chain is 4-hydroxy-tetrahydrodipicolinate reductase from Streptomyces avermitilis (strain ATCC 31267 / DSM 46492 / JCM 5070 / NBRC 14893 / NCIMB 12804 / NRRL 8165 / MA-4680).